Reading from the N-terminus, the 583-residue chain is Torsin-1A-interacting protein 1 (583 aa).

The Nuclear segment spans residues Met-1–Trp-339. The tract at residues Ala-23–Ala-208 is disordered. At Ser-60 the chain carries Phosphoserine. Composition is skewed to basic and acidic residues over residues Phe-70–Glu-101 and Gly-115–Gln-132. Residues Ser-134, Ser-142, Ser-155, and Ser-157 each carry the phosphoserine modification. Positions Ser-166–Met-188 are enriched in polar residues. Ser-189 carries the phosphoserine modification. Thr-222 is subject to Phosphothreonine. Residues Ser-228, Ser-231, and Ser-242 each carry the phosphoserine modification. A Glycyl lysine isopeptide (Lys-Gly) (interchain with G-Cter in SUMO2) cross-link involves residue Lys-309. Residue Ser-316 is modified to Phosphoserine. The chain crosses the membrane as a helical span at residues Leu-340–Val-360. Positions His-356–Leu-583 are interaction with TOR1A. The stretch at Val-360–Lys-388 forms a coiled coil. The Perinuclear space segment spans residues Glu-361–Leu-583. N-linked (GlcNAc...) asparagine glycosylation is present at Asn-399.

It belongs to the TOR1AIP family. Interacts with ATP1B4. Interacts with TOR1A (ATP-bound). Interacts with TOR1B, TOR2A and TOR3A. Interacts with VIM.

It is found in the nucleus inner membrane. Functionally, required for nuclear membrane integrity. Induces TOR1A and TOR1B ATPase activity and is required for their location on the nuclear membrane. Binds to A- and B-type lamins. Possible role in membrane attachment and assembly of the nuclear lamina. In Rattus norvegicus (Rat), this protein is Torsin-1A-interacting protein 1 (Tor1aip1).